Consider the following 510-residue polypeptide: Probable allantoinase 2 (510 aa).

Residues histidine 97, histidine 99, lysine 185, histidine 228, histidine 287, and aspartate 360 each coordinate Zn(2+). At lysine 185 the chain carries N6-carboxylysine.

This sequence belongs to the metallo-dependent hydrolases superfamily. Allantoinase family. Homotetramer. Zn(2+) is required as a cofactor. In terms of processing, carboxylation allows a single lysine to coordinate two zinc ions.

The catalysed reaction is (S)-allantoin + H2O = allantoate + H(+). It functions in the pathway nitrogen metabolism; (S)-allantoin degradation; allantoate from (S)-allantoin: step 1/1. The polypeptide is Probable allantoinase 2 (allB2) (Dictyostelium discoideum (Social amoeba)).